The sequence spans 516 residues: MGLHFKWPLGAPMLAAIYAMSMVLKMLPALGMACPPKCRCEKLLFYCDSQGFHSVPNATDKGSLGLSLRHNHITELERDQFASFSQLTWLHLDHNQISTVKEDAFQGLYKLKELILSSNKIFYLPNTTFTQLINLQNLDLSFNQLSSLHPELFYGLRKLQTLHLRSNSLRTIPVRLFWDCRSLEFLDLSTNRLRSLARNGFAGLIKLRELHLEHNQLTKINFAHFLRLSSLHTLFLQWNKISNLTCGMEWTWGTLEKLDLTGNEIKAIDLTVFETMPNLKILLMDNNKLNSLDSKILNSLRSLTTVGLSGNLWECSARICALASWLGSFQGRWEHSILCHSPDHTQGEDILDAVHGFQLCWNLSTTVTVMATTYRDPTTEYTKRISSSSYHVGDKEIPTTAGIAVTTEEHFPEPDNAIFTQRVITGTMALLFSFFFIIFIVFISRKCCPPTLRRIRQCSMVQNHRQLRSQTRLHMSNMSDQGPYNEYEPTHEGPFIIINGYGQCKCQQLPYKECEV.

An N-terminal signal peptide occupies residues 1–33 (MGLHFKWPLGAPMLAAIYAMSMVLKMLPALGMA). The LRRNT domain occupies 34–61 (CPPKCRCEKLLFYCDSQGFHSVPNATDK). The Extracellular portion of the chain corresponds to 34–422 (CPPKCRCEKL…EPDNAIFTQR (389 aa)). N-linked (GlcNAc...) asparagine glycosylation is present at N57. 10 LRR repeats span residues 63–83 (SLGL…QFAS), 86–107 (QLTW…AFQG), 110–131 (KLKE…TFTQ), 134–155 (NLQN…LFYG), 158–179 (KLQT…LFWD), 182–203 (SLEF…GFAG), 206–227 (KLRE…HFLR), 230–251 (SLHT…MEWT), 254–275 (TLEK…VFET), and 278–299 (NLKI…ILNS). The N-linked (GlcNAc...) asparagine glycan is linked to N126. N-linked (GlcNAc...) asparagine glycosylation occurs at N243. Positions 311–362 (NLWECSARICALASWLGSFQGRWEHSILCHSPDHTQGEDILDAVHGFQLCWN) constitute an LRRCT domain. A glycan (N-linked (GlcNAc...) asparagine) is linked at N362. The helical transmembrane segment at 423–443 (VITGTMALLFSFFFIIFIVFI) threads the bilayer. Residues 444–516 (SRKCCPPTLR…QQLPYKECEV (73 aa)) are Cytoplasmic-facing. Residues 513-516 (ECEV) carry the Involved in DLG4-binding motif.

This sequence belongs to the LRRTM family. As to quaternary structure, interacts with DLG4. Interacts with neurexin NRXN1; interaction is mediated by heparan sulfate glycan modification on neurexin. As to expression, expressed in neuronal tissues.

It localises to the cell membrane. Its subcellular location is the postsynaptic cell membrane. Functionally, involved in the development and maintenance of excitatory synapses in the vertebrate nervous system. Regulates surface expression of AMPA receptors and instructs the development of functional glutamate release sites. Acts as a ligand for the presynaptic receptors NRXN1-A and NRXN1-B. This chain is Leucine-rich repeat transmembrane neuronal protein 2 (LRRTM2), found in Homo sapiens (Human).